Here is a 379-residue protein sequence, read N- to C-terminus: UPF0754 protein BpOF4_11355 (379 aa).

2 consecutive transmembrane segments (helical) span residues 6–26 (FIGF…SLAI) and 359–379 (LGAL…LFIG).

This sequence belongs to the UPF0754 family.

It is found in the cell membrane. The polypeptide is UPF0754 protein BpOF4_11355 (Alkalihalophilus pseudofirmus (strain ATCC BAA-2126 / JCM 17055 / OF4) (Bacillus pseudofirmus)).